Reading from the N-terminus, the 206-residue chain is Guanylate kinase (206 aa).

Residues 7–185 (GLLIVISGPS…AVEKIRAIII (179 aa)) form the Guanylate kinase-like domain. 14-21 (GPSGAGKG) is an ATP binding site.

It belongs to the guanylate kinase family.

Its subcellular location is the cytoplasm. The enzyme catalyses GMP + ATP = GDP + ADP. Functionally, essential for recycling GMP and indirectly, cGMP. The polypeptide is Guanylate kinase (Caldanaerobacter subterraneus subsp. tengcongensis (strain DSM 15242 / JCM 11007 / NBRC 100824 / MB4) (Thermoanaerobacter tengcongensis)).